The primary structure comprises 391 residues: E3 ubiquitin-protein ligase RMND5A (391 aa).

Residues 114–146 (SQQILSEVMVEHFFRQGMLDVAEELCQEAGLSI) form the LisH domain. A CTLH domain is found at 153-210 (PFVELNRILEALKVRVLRPALEWAVSNREMLMAQNSSLEFKLHRLYFISLLMGGTVNQ). The RING-Gid-type zinc finger occupies 336–377 (CPILRQQTTDNNPPMKLVCGHIISRDALNKMFNGSKLKCPYC).

As to quaternary structure, identified in the CTLH complex that contains at least RANBP9, MKLN1, MAEA, RMND5A, GID8 and ARMC8.

Its subcellular location is the nucleus. It localises to the nucleoplasm. The protein resides in the cytoplasm. The catalysed reaction is S-ubiquitinyl-[E2 ubiquitin-conjugating enzyme]-L-cysteine + [acceptor protein]-L-lysine = [E2 ubiquitin-conjugating enzyme]-L-cysteine + N(6)-ubiquitinyl-[acceptor protein]-L-lysine.. In terms of biological role, E3 ubiquitin-protein ligase component of the CTLH complex. The polypeptide is E3 ubiquitin-protein ligase RMND5A (rmnd5a) (Xenopus tropicalis (Western clawed frog)).